A 318-amino-acid chain; its full sequence is Ubiquitin-like domain-containing CTD phosphatase 1 (318 aa).

The Ubiquitin-like domain maps to 3–81; the sequence is VSVIIKWGGQ…IMMMGTREES (79 aa). The FCP1 homology domain maps to 133–294; the sequence is PRPGKRLLVL…YKLSQYLKEI (162 aa). Asp-143, Asp-145, and Asp-253 together coordinate Mg(2+).

Mg(2+) serves as cofactor.

It is found in the nucleus. It carries out the reaction O-phospho-L-seryl-[protein] + H2O = L-seryl-[protein] + phosphate. The catalysed reaction is O-phospho-L-threonyl-[protein] + H2O = L-threonyl-[protein] + phosphate. Its function is as follows. Dephosphorylates 26S nuclear proteasomes, thereby decreasing their proteolytic activity. Recruited to the 19S regulatory particle of the 26S proteasome where it dephosphorylates 19S component psmc2 which impairs psmc2 ATPase activity and disrupts 26S proteasome assembly. Has also been reported to stimulate the proteolytic activity of the 26S proteasome. The polypeptide is Ubiquitin-like domain-containing CTD phosphatase 1 (ublcp1) (Danio rerio (Zebrafish)).